The sequence spans 179 residues: MYMLGSLCKEAVAQSLMSKLGCSSVMQVPKVVKVCLNMGIGIGAMDSKVMDSCSRDLALISAQKPVVTRARRSIAGFKIRKGFPIGCMVTLRGKKMYEFLDRLINIALPRERDFKGLSMSQFDGHGNISFGVKEHISFLEVDYDKIDKVRGFDVSVVTTAKSDYDAKALLTELGFPFVN.

This sequence belongs to the universal ribosomal protein uL5 family. In terms of assembly, part of the 50S ribosomal subunit; part of the 5S rRNA/L5/L18/L25 subcomplex. Contacts the 5S rRNA and the P site tRNA. Forms a bridge to the 30S subunit in the 70S ribosome.

Functionally, this is one of the proteins that bind and probably mediate the attachment of the 5S RNA into the large ribosomal subunit, where it forms part of the central protuberance. In the 70S ribosome it contacts protein S13 of the 30S subunit (bridge B1b), connecting the 2 subunits; this bridge is implicated in subunit movement. Contacts the P site tRNA; the 5S rRNA and some of its associated proteins might help stabilize positioning of ribosome-bound tRNAs. This is Large ribosomal subunit protein uL5 from Anaplasma marginale (strain Florida).